Here is a 569-residue protein sequence, read N- to C-terminus: Urease subunit alpha (569 aa).

Residues 131 to 569 (GSIDTHIHFI…VPMAQKYFLL (439 aa)) enclose the Urease domain. Residues histidine 136, histidine 138, and lysine 219 each coordinate Ni(2+). Position 219 is an N6-carboxylysine (lysine 219). Histidine 221 serves as a coordination point for substrate. 2 residues coordinate Ni(2+): histidine 248 and histidine 274. Residue histidine 322 is the Proton donor of the active site. Residue aspartate 362 coordinates Ni(2+).

Belongs to the metallo-dependent hydrolases superfamily. Urease alpha subunit family. As to quaternary structure, heterotrimer of UreA (gamma), UreB (beta) and UreC (alpha) subunits. Two heterotrimers associate to form the active enzyme. In most bacteria it is thought that three heterotrimers form the active enzyme. Ni cation serves as cofactor. Carboxylation allows a single lysine to coordinate two nickel ions.

It localises to the cytoplasm. The enzyme catalyses urea + 2 H2O + H(+) = hydrogencarbonate + 2 NH4(+). It participates in nitrogen metabolism; urea degradation; CO(2) and NH(3) from urea (urease route): step 1/1. Its activity is regulated as follows. Inhibited by HgCl2 and acetohydroxyamic acid slightly by EDTA, but not by boric acid or L-methionine-DL-sulfoximine. This chain is Urease subunit alpha, found in Prochlorococcus marinus subsp. pastoris (strain PCC 9511).